The primary structure comprises 426 residues: 3-phosphoshikimate 1-carboxyvinyltransferase (426 aa).

3 residues coordinate 3-phosphoshikimate: Lys20, Ser21, and Arg25. Lys20 serves as a coordination point for phosphoenolpyruvate. Residues Gly92 and Arg120 each coordinate phosphoenolpyruvate. 3-phosphoshikimate-binding residues include Ser165, Gln167, Asp313, and Lys340. Gln167 is a phosphoenolpyruvate binding site. The active-site Proton acceptor is the Asp313. Phosphoenolpyruvate is bound by residues Arg344 and Arg386.

Belongs to the EPSP synthase family. Monomer.

The protein localises to the cytoplasm. The catalysed reaction is 3-phosphoshikimate + phosphoenolpyruvate = 5-O-(1-carboxyvinyl)-3-phosphoshikimate + phosphate. The protein operates within metabolic intermediate biosynthesis; chorismate biosynthesis; chorismate from D-erythrose 4-phosphate and phosphoenolpyruvate: step 6/7. Catalyzes the transfer of the enolpyruvyl moiety of phosphoenolpyruvate (PEP) to the 5-hydroxyl of shikimate-3-phosphate (S3P) to produce enolpyruvyl shikimate-3-phosphate and inorganic phosphate. The polypeptide is 3-phosphoshikimate 1-carboxyvinyltransferase (Brevibacillus brevis (strain 47 / JCM 6285 / NBRC 100599)).